The primary structure comprises 438 residues: Mannan endo-1,4-beta-mannosidase F (438 aa).

A signal peptide spans 1 to 17; sequence MHPLPSVALLSAIGAVA. Positions 19–54 constitute a CBM1 domain; it reads QVGPWGQCGGRSYTGETSCVSGWSCVLFNEWYSQCQ. Positions 60–96 are ser-rich linker; the sequence is STSSVSATAAPSSTSSSKESVPSATTSKKPVPTGSSS. Residues 61–86 are compositionally biased toward low complexity; it reads TSSVSATAAPSSTSSSKESVPSATTS. The segment at 61–92 is disordered; sequence TSSVSATAAPSSTSSSKESVPSATTSKKPVPT. The interval 97–438 is catalytic; it reads FVKADGLKFN…CGVADHLSTL (342 aa). The substrate site is built by Trp149 and Asn263. Glu264 functions as the Proton donor in the catalytic mechanism. Asn277 is a glycosylation site (N-linked (GlcNAc...) asparagine). Tyr339 serves as a coordination point for substrate. Glu373 serves as the catalytic Nucleophile. Residue Trp402 coordinates substrate.

This sequence belongs to the glycosyl hydrolase 5 (cellulase A) family.

The protein resides in the secreted. It carries out the reaction Random hydrolysis of (1-&gt;4)-beta-D-mannosidic linkages in mannans, galactomannans and glucomannans.. Functionally, endo-1,4-mannanase, a crucial enzyme for depolymerization of seed galactomannans and wood galactoglucomannans. The protein is Mannan endo-1,4-beta-mannosidase F (manF) of Aspergillus fumigatus (strain ATCC MYA-4609 / CBS 101355 / FGSC A1100 / Af293) (Neosartorya fumigata).